The chain runs to 466 residues: MGQTLYEKLYNSHIIYEDKNTLPIIYIDLHLLHEVTSPQAFESLKNKKRIVHAPIKTFATMDHNVSTKTNKISASGKAAQIQMQQLINNCKDFNIKLYDLNHINQGIVHVMGPEQGLTLPGMTIVCGDSHTSTHGAFGTLAFGIGTSEVEHVLATQTLKQARSKTMKIGINGILKPYITAKDVILYIIKKVGTAFGTGYVVEFSGETIENLTMEGRMTICNMVIEMGAKSGIIAPDATTYKYLKNLPYAPKKEKWKNALEYWKNLKTDNDAKFDKIVKFDVSQIEPQITWGTNPSQTINITESNPDPKKINNIIDKQATEKALKYMNLKPNQKMINLVVDKVFIGSCTNSRIEDLRIASKIIKNKKVAKTTKAIVVPGSKLVKIQAEKEGLDKIFINAGFEWRLPGCSMCLAMNDDKLNRGERCASTSNRNFEDRQGRGGRTHLVSPITAAAAAIFGYFVDIKNIL.

Residues Cys-347, Cys-407, and Cys-410 each coordinate [4Fe-4S] cluster.

Belongs to the aconitase/IPM isomerase family. LeuC type 1 subfamily. In terms of assembly, heterodimer of LeuC and LeuD. [4Fe-4S] cluster serves as cofactor.

The catalysed reaction is (2R,3S)-3-isopropylmalate = (2S)-2-isopropylmalate. It functions in the pathway amino-acid biosynthesis; L-leucine biosynthesis; L-leucine from 3-methyl-2-oxobutanoate: step 2/4. In terms of biological role, catalyzes the isomerization between 2-isopropylmalate and 3-isopropylmalate, via the formation of 2-isopropylmaleate. The protein is 3-isopropylmalate dehydratase large subunit of Buchnera aphidicola subsp. Thelaxes suberi.